Consider the following 228-residue polypeptide: Probable septum site-determining protein MinC (228 aa).

This sequence belongs to the MinC family. As to quaternary structure, interacts with MinD and FtsZ.

Functionally, cell division inhibitor that blocks the formation of polar Z ring septums. Rapidly oscillates between the poles of the cell to destabilize FtsZ filaments that have formed before they mature into polar Z rings. Prevents FtsZ polymerization. The polypeptide is Probable septum site-determining protein MinC (Bacillus cereus (strain B4264)).